Here is a 105-residue protein sequence, read N- to C-terminus: Large ribosomal subunit protein uL24 (105 aa).

Belongs to the universal ribosomal protein uL24 family. In terms of assembly, part of the 50S ribosomal subunit.

Functionally, one of two assembly initiator proteins, it binds directly to the 5'-end of the 23S rRNA, where it nucleates assembly of the 50S subunit. In terms of biological role, one of the proteins that surrounds the polypeptide exit tunnel on the outside of the subunit. The sequence is that of Large ribosomal subunit protein uL24 from Nitrosospira multiformis (strain ATCC 25196 / NCIMB 11849 / C 71).